Consider the following 158-residue polypeptide: MELSAIGEQVFAVESIRKKRVRKGKVEYLVKWKGWPPKYSTWEPEEHILDPRLVMAYEEKEEKDRASGYRKRGPKPKRLLLQESAAPDVLQATGDWEPVEQPPEEEAEADLTNGPPPWTPMLPSSEVTVTDITANSVTVTFREAQAAEGFFRDRSGKL.

A Chromo domain is found at 11-69 (FAVESIRKKRVRKGKVEYLVKWKGWPPKYSTWEPEEHILDPRLVMAYEEKEEKDRASGY). The interval 60 to 124 (KEEKDRASGY…PPPWTPMLPS (65 aa)) is disordered. The span at 68-78 (GYRKRGPKPKR) shows a compositional bias: basic residues.

Component of a PRC1-like complex. Distinct PRC1-like core complexes are composed of a RING1 subunit (RING1B or RING1A), one of the six PCGF proteins (PCGF1-6), one PHC protein (PHC1-3) and one of the CBX proteins (CBX2, CBX4, CBX6, CBX7 or CBX8). The composition of the PRC1 complex may differ between the PRC1 complex in pluripotent embryonic stem cells containing RNF2, CBX7 and PCGF2, and the PRC1 complex in differentiating cells containing RNF2, CBX2, CBX4 and BMI1. Interacts with RING1. Interacts with RNF2/RING1B. Interacts with PCGF1, PCGF2, PCGF3, PCGF5 and PCGF6. Interacts (via chromodomain) with histone H3K9Me3 and H3K27me3. Interacts with H3K9Me2 and H4K20Me1. Interacts (via chromodomain) with single-stranded and double-stranded RNA; RNA binding seems to be required for the localization to chromatin.

It localises to the nucleus. The protein localises to the chromosome. Functionally, component of a Polycomb group (PcG) multiprotein PRC1-like complex, a complex class required to maintain the transcriptionally repressive state of many genes, including Hox genes, throughout development. PcG PRC1 complex acts via chromatin remodeling and modification of histones; it mediates monoubiquitination of histone H2A 'Lys-119', rendering chromatin heritably changed in its expressibility. Promotes histone H3 trimethylation at 'Lys-9' (H3K9me3). Binds to histone H3 trimethylated 'Lys-9' (H3K9me3) or at 'Lys-27' (H3K27me3). May possibly also bind trimethylated lysine residues in other proteins (in vitro). Binds non-coding, single-stranded and double-stranded RNA. Plays a role in the timely repression of differentiation-specific genes in pluripotent embryonic stem cells to maintain the undifferentiated state. Regulator of cellular lifespan by maintaining the repression of CDKN2A, but not by inducing telomerase activity. The protein is Chromobox protein homolog 7 (Cbx7) of Rattus norvegicus (Rat).